Reading from the N-terminus, the 677-residue chain is Envelope glycoprotein (677 aa).

Residues 1 to 33 form the signal peptide; that stretch reads MGSGYQLLQLPRERFRKTSFLVWVIILFQRAIS. The Extracellular portion of the chain corresponds to 34-651; that stretch reads MPLGIVTNST…DLNLWTGWRQ (618 aa). N-linked (GlcNAc...) asparagine; by host glycosylation occurs at Asn-41. 5 cysteine pairs are disulfide-bonded: Cys-54-Cys-610, Cys-109-Cys-136, Cys-122-Cys-148, Cys-512-Cys-557, and Cys-602-Cys-609. Positions 55–202 are receptor-binding; the sequence is RDKLSSTSQL…HFWKATPAHE (148 aa). N-linked (GlcNAc...) asparagine; by host glycans are attached at residues Asn-205, Asn-239, Asn-258, Asn-269, Asn-297, Asn-317, Asn-318, Asn-339, Asn-406, Asn-420, Asn-435, and Asn-463. The segment at 306–486 is mucin-like region; the sequence is NLHFQILSTH…PSQPGFTINT (181 aa). Polar residues predominate over residues 315-326; it reads HTNNSSDQSPAG. Disordered regions lie at residues 315–349, 370–482, and 489–508; these read HTNN…TDSP, NGET…QPGF, and KVAD…RQNT. Composition is skewed to polar residues over residues 370-421 and 429-472; these read NGET…ASNE and NPIQ…TSPG. A fusion peptide region spans residues 525-540; the sequence is GAAVGLAWIPYFGPAA. The stretch at 555 to 596 forms a coiled coil; the sequence is LICGLRQLANETTQALQLFLRATTELRTYSLLNRKAIDFLLQ. An N-linked (GlcNAc...) asparagine; by host glycan is attached at Asn-564. Residues 616–635 adopt a coiled-coil conformation; the sequence is WTKNITDEINQIKHDFIDNP. N-linked (GlcNAc...) asparagine; by host glycosylation is present at Asn-619. A helical transmembrane segment spans residues 652 to 672; it reads WIPAGIGIIGVIIAIIALLCI. 2 S-palmitoyl cysteine; by host lipidation sites follow: Cys-671 and Cys-673. The Cytoplasmic segment spans residues 673–677; sequence CKILC.

The protein belongs to the filoviruses glycoprotein family. In terms of assembly, homotrimer; each monomer consists of a GP1 and a GP2 subunit linked by disulfide bonds. The resulting peplomers (GP1,2) protrude from the virus surface as spikes. Interacts with host integrin alpha-V/ITGAV. Interacts with host CLEC10A. Binds also to host CD209 and CLEC4M/DC-SIGN(R). Interacts with host FOLR1. Interacts with BST2; this interaction inhibits the antiviral effect of BST2 and this allows viral release from infected cells. Interacts with host FCN1; this interaction enhances viral entry. Interacts with host TLR4; this interaction induces cell death in T-lymphocytes or proinflammatory cytokines and SOCS1 production in monocytes. Interacts with host entry receptor NPC1. As to quaternary structure, GP1 and GP2delta are part of GP1,2delta soluble complexes released by ectodomain shedding. In terms of processing, the signal peptide region modulates GP's high mannose glycosylation, thereby determining the efficiency of the interactions with DC-SIGN(R). Post-translationally, N-glycosylated. O-glycosylated in the mucin-like region. In terms of processing, palmitoylation of GP2 is not required for its function. Post-translationally, specific enzymatic cleavages in vivo yield mature proteins. The precursor is processed into GP1 and GP2 by host cell furin in the trans Golgi, and maybe by other host proteases, to yield the mature GP1 and GP2 proteins. The cleavage site corresponds to the furin optimal cleavage sequence [KR]-X-[KR]-R. This cleavage does not seem to be required for function. After the internalization of the virus into cell endosomes, GP1 C-terminus is removed by the endosomal proteases cathepsin B, cathepsin L, or both, leaving a 19-kDa N-terminal fragment which is further digested by cathepsin B. Proteolytic processing of GP1,2 by host ADAM17 can remove the transmembrane anchor of GP2 and leads to shedding of complexes consisting in GP1 and truncated GP2 (GP1,2delta).

The protein resides in the virion membrane. Its subcellular location is the host cell membrane. It localises to the secreted. Trimeric GP1,2 complexes form the virion surface spikes and mediate the viral entry processes, with GP1 acting as the receptor-binding subunit and GP2 as the membrane fusion subunit. At later times of infection, down-regulates the expression of various host cell surface molecules that are essential for immune surveillance and cell adhesion. Down-modulates several integrins including ITGA1, ITGA2, ITGA3, ITGA4, ITGA5, ITGA6, ITGAV and ITGB1. This decrease in cell adhesion molecules may lead to cell detachment, contributing to the disruption of blood vessel integrity and hemorrhages developed during infection (cytotoxicity). Interacts with host TLR4 and thereby stimulates the differentiation and activation of monocytes leading to bystander death of T-lymphocytes. Down-regulates as well the function of host natural killer cells. Counteracts the antiviral effect of host BST2/tetherin that restricts release of progeny virions from infected cells. However, cooperates with VP40 and host BST2 to activate canonical NF-kappa-B pathway in a manner dependent on neddylation. Its function is as follows. Functions as a decoy for anti-GP1,2 antibodies thereby contributing to viral immune evasion. Interacts and activates host macrophages and dendritic cells inducing up-regulation of cytokine transcription. This effect is mediated throught activation of host TLR4. Functionally, responsible for binding to the receptor(s) on target cells. Interacts with CD209/DC-SIGN and CLEC4M/DC-SIGNR which act as cofactors for virus entry into dendritic cells (DCs) and endothelial cells. Binding to the macrophage specific lectin CLEC10A also seems to enhance virus infectivity. Interaction with FOLR1/folate receptor alpha may be a cofactor for virus entry in some cell types, although results are contradictory. Members of the Tyro3 receptor tyrosine kinase family also seem to be cell entry factors in filovirus infection. Once attached, the virions are internalized through clathrin-dependent endocytosis and/or macropinocytosis. After internalization of the virus into the endosomes of the host cell, proteolysis of GP1 by two cysteine proteases, CTSB/cathepsin B and CTSL/cathepsin L removes the glycan cap and allows GP1 binding to the host entry receptor NPC1. NPC1-binding, Ca(2+) and acidic pH induce a conformational change of GP2, which unmasks its fusion peptide and permit membranes fusion. In terms of biological role, acts as a class I viral fusion protein. Under the current model, the protein has at least 3 conformational states: pre-fusion native state, pre-hairpin intermediate state, and post-fusion hairpin state. During viral and target cell membrane fusion, the coiled coil regions (heptad repeats) assume a trimer-of-hairpins structure, positioning the fusion peptide in close proximity to the C-terminal region of the ectodomain. The formation of this structure appears to drive apposition and subsequent fusion of viral and target cell membranes. Responsible for penetration of the virus into the cell cytoplasm by mediating the fusion of the membrane of the endocytosed virus particle with the endosomal membrane. Low pH in endosomes induces an irreversible conformational change in GP2, releasing the fusion hydrophobic peptide. In Homo sapiens (Human), this protein is Envelope glycoprotein (GP).